A 142-amino-acid polypeptide reads, in one-letter code: Hemoglobin subunit alpha (142 aa).

Positions 1 to 142 (GLTAADKTLI…VEKALFETYR (142 aa)) constitute a Globin domain. His-59 is a binding site for O2. His-88 lines the heme b pocket.

Belongs to the globin family. Heterotetramer of two alpha chains and two beta chains (an easy dimerization is also reported). As to expression, red blood cells.

Its function is as follows. Involved in oxygen transport from the lung to the various peripheral tissues. The protein is Hemoglobin subunit alpha (HBA) of Latimeria chalumnae (Coelacanth).